Here is a 154-residue protein sequence, read N- to C-terminus: Heat shock protein beta-3 (154 aa).

The tract at residues 48–71 (ARGAGTPQALAEDSASTEKPPGEG) is disordered. Positions 57–154 (LAEDSASTEK…VEVKDSLGTK (98 aa)) constitute a sHSP domain.

Belongs to the small heat shock protein (HSP20) family.

The protein localises to the cytoplasm. It is found in the nucleus. Functionally, inhibitor of actin polymerization. The chain is Heat shock protein beta-3 (Hspb3) from Mus musculus (Mouse).